The primary structure comprises 187 residues: dCTP deaminase (187 aa).

DCTP contacts are provided by residues 110–115, 134–136, glutamine 155, tyrosine 169, and glutamine 179; these read KSTYAR and TLE. Glutamate 136 serves as the catalytic Proton donor/acceptor.

Belongs to the dCTP deaminase family. Homotrimer.

The catalysed reaction is dCTP + H2O + H(+) = dUTP + NH4(+). It functions in the pathway pyrimidine metabolism; dUMP biosynthesis; dUMP from dCTP (dUTP route): step 1/2. Catalyzes the deamination of dCTP to dUTP. In Bordetella bronchiseptica (strain ATCC BAA-588 / NCTC 13252 / RB50) (Alcaligenes bronchisepticus), this protein is dCTP deaminase.